Consider the following 268-residue polypeptide: tRNA pseudouridine synthase A (268 aa).

D63 serves as the catalytic Nucleophile. Residue Y122 participates in substrate binding.

Belongs to the tRNA pseudouridine synthase TruA family. As to quaternary structure, homodimer.

The enzyme catalyses uridine(38/39/40) in tRNA = pseudouridine(38/39/40) in tRNA. In terms of biological role, formation of pseudouridine at positions 38, 39 and 40 in the anticodon stem and loop of transfer RNAs. In Treponema denticola (strain ATCC 35405 / DSM 14222 / CIP 103919 / JCM 8153 / KCTC 15104), this protein is tRNA pseudouridine synthase A.